The sequence spans 42 residues: Photosystem I reaction center subunit IX (42 aa).

A helical transmembrane segment spans residues 7 to 27 (YLSVAPVLSTLWFVSLAGLLI).

It belongs to the PsaJ family.

It localises to the plastid. It is found in the chloroplast thylakoid membrane. Functionally, may help in the organization of the PsaE and PsaF subunits. The protein is Photosystem I reaction center subunit IX of Capsella bursa-pastoris (Shepherd's purse).